Consider the following 365-residue polypeptide: 3-isopropylmalate dehydrogenase (365 aa).

An NAD(+)-binding site is contributed by 78-89; the sequence is GPKWGTGKVRPE. Positions 96, 106, 135, and 224 each coordinate substrate. 3 residues coordinate Mg(2+): Asp-224, Asp-249, and Asp-253. An NAD(+)-binding site is contributed by 289–301; sequence GSAPDISGKGIVN.

This sequence belongs to the isocitrate and isopropylmalate dehydrogenases family. Homodimer. Requires Mg(2+) as cofactor. The cofactor is Mn(2+).

The protein resides in the cytoplasm. The catalysed reaction is (2R,3S)-3-isopropylmalate + NAD(+) = 4-methyl-2-oxopentanoate + CO2 + NADH. Its pathway is amino-acid biosynthesis; L-leucine biosynthesis; L-leucine from 3-methyl-2-oxobutanoate: step 3/4. Catalyzes the oxidation of 3-carboxy-2-hydroxy-4-methylpentanoate (3-isopropylmalate) to 3-carboxy-4-methyl-2-oxopentanoate. The product decarboxylates to 4-methyl-2 oxopentanoate. This Zymoseptoria tritici (Speckled leaf blotch fungus) protein is 3-isopropylmalate dehydrogenase (LEUC).